The chain runs to 34 residues: Photosystem I reaction center subunit XII (34 aa).

Residues 9–29 traverse the membrane as a helical segment; that stretch reads LIALSLIVVVHAGVLALRLGI.

Belongs to the PsaM family.

It is found in the cellular thylakoid membrane. The sequence is that of Photosystem I reaction center subunit XII from Prochlorococcus marinus (strain MIT 9312).